Reading from the N-terminus, the 806-residue chain is 85/88 kDa calcium-independent phospholipase A2 (806 aa).

ANK repeat units follow at residues Trp-120–Ala-147, Glu-151–Val-181, Lys-185–Gln-215, Gln-219–Ile-248, Pro-251–Ser-281, Tyr-286–Ser-312, Ala-316–Ala-345, His-349–Thr-378, and Phe-382–Leu-403. The next 2 membrane-spanning stretches (helical) occupy residues Leu-480–Ile-500 and Leu-511–Ser-531. The PNPLA domain occupies Leu-481–Met-665. The GXGXXG motif lies at Gly-485 to Gly-490. The short motif at Gly-517–Gly-521 is the GXSXG element. The Nucleophile role is filled by Ser-519. Asp-652 (proton acceptor) is an active-site residue. The short motif at Asp-652–Gly-654 is the DGA/G element. Residues Arg-677–Lys-686 are calmodulin-binding (1-9-14 motif). Positions Ala-748 to Arg-759 are calmodulin-binding (IQ motif).

Homodimer formed by catalytic domains tightly interacting through a large hydrophobic interface. The contact area involves 3 alpha helices, several loops and a part of the beta sheet from each monomer. Both active sites of the dimer are in close proximity adopting an open conformation that provide sufficient space for phospholipid access and favoring cooperativity in deacylation-reacylation reactions. Each monomer has 9 ankyrin repeats stacked side-by-side in an elongated structure oriented outwards from the catalytic core. As to expression, four different transcripts were found to be expressed in a distinct tissue distribution.

The protein resides in the cytoplasm. The protein localises to the cell membrane. It is found in the mitochondrion. Its subcellular location is the cell projection. It localises to the pseudopodium. It catalyses the reaction a 1,2-diacyl-sn-glycero-3-phosphocholine + H2O = a 1-acyl-sn-glycero-3-phosphocholine + a fatty acid + H(+). The catalysed reaction is a 1-O-alkyl-2-acyl-sn-glycero-3-phosphocholine + H2O = a 1-O-alkyl-sn-glycero-3-phosphocholine + a fatty acid + H(+). The enzyme catalyses 1,2-dihexadecanoyl-sn-glycero-3-phosphocholine + H2O = 1-hexadecanoyl-sn-glycero-3-phosphocholine + hexadecanoate + H(+). It carries out the reaction 1-hexadecanoyl-2-(9Z-octadecenoyl)-sn-glycero-3-phosphocholine + H2O = 1-hexadecanoyl-sn-glycero-3-phosphocholine + (9Z)-octadecenoate + H(+). It catalyses the reaction 1-hexadecanoyl-2-(9Z,12Z-octadecadienoyl)-sn-glycero-3-phosphocholine + H2O = (9Z,12Z)-octadecadienoate + 1-hexadecanoyl-sn-glycero-3-phosphocholine + H(+). The catalysed reaction is 1-hexadecanoyl-2-(5Z,8Z,11Z,14Z-eicosatetraenoyl)-sn-glycero-3-phosphocholine + H2O = 1-hexadecanoyl-sn-glycero-3-phosphocholine + (5Z,8Z,11Z,14Z)-eicosatetraenoate + H(+). The enzyme catalyses 1-octadecanoyl-2-(5Z,8Z,11Z,14Z-eicosatetraenoyl)-sn-glycero-3-phosphocholine + H2O = 1-octadecanoyl-sn-glycero-3-phosphocholine + (5Z,8Z,11Z,14Z)-eicosatetraenoate + H(+). It carries out the reaction 1-hexadecanoyl-2-(5Z,8Z,11Z,14Z-eicosatetraenoyl)-sn-glycero-3-phosphoethanolamine + H2O = 1-hexadecanoyl-sn-glycero-3-phosphoethanolamine + (5Z,8Z,11Z,14Z)-eicosatetraenoate + H(+). It catalyses the reaction 1,2-dihexadecanoyl-sn-glycero-3-phosphate + H2O = 1-hexadecanoyl-sn-glycero-3-phosphate + hexadecanoate + H(+). The catalysed reaction is a 1-acyl-sn-glycero-3-phosphocholine + H2O = sn-glycerol 3-phosphocholine + a fatty acid + H(+). The enzyme catalyses 1-hexadecanoyl-sn-glycero-3-phosphocholine + H2O = sn-glycerol 3-phosphocholine + hexadecanoate + H(+). It carries out the reaction 1-(5Z,8Z,11Z,14Z-eicosatetraenoyl)-sn-glycero-3-phosphocholine + H2O = sn-glycerol 3-phosphocholine + (5Z,8Z,11Z,14Z)-eicosatetraenoate + H(+). It catalyses the reaction 2-(5Z,8Z,11Z,14Z)-eicosatetraenoyl-sn-glycero-3-phosphocholine + H2O = sn-glycerol 3-phosphocholine + (5Z,8Z,11Z,14Z)-eicosatetraenoate + H(+). The catalysed reaction is 1-O-hexadecyl-2-(5Z,8Z,11Z,14Z)-eicosatetraenoyl-sn-glycero-3-phosphocholine + H2O = 1-O-hexadecyl-sn-glycero-3-phosphocholine + (5Z,8Z,11Z,14Z)-eicosatetraenoate + H(+). The enzyme catalyses 1-O-hexadecyl-2-acetyl-sn-glycero-3-phosphocholine + H2O = 1-O-hexadecyl-sn-glycero-3-phosphocholine + acetate + H(+). It carries out the reaction hexadecanoyl-CoA + H2O = hexadecanoate + CoA + H(+). It catalyses the reaction 1',3'-bis[1,2-di-(9Z-octadecenoyl)-sn-glycero-3-phospho]-glycerol + H2O = 1'-[1,2-di-(9Z-octadecenoyl)-sn-glycero-3-phospho]-3'-[1-(9Z-octadecenoyl)-sn-glycero-3-phospho]-glycerol + (9Z)-octadecenoate + H(+). The catalysed reaction is 1'-[1,2-di-(9Z-octadecenoyl)-sn-glycero-3-phospho]-3'-[1-(9Z-octadecenoyl)-sn-glycero-3-phospho]-glycerol + H2O = 1',3'-bis-[1-(9Z-octadecenoyl)-sn-glycero-3-phospho]-glycerol + (9Z)-octadecenoate + H(+). The enzyme catalyses 1',3'-bis-[1,2-di-(9Z,12Z-octadecadienoyl)-sn-glycero-3-phospho]-glycerol + H2O = 1'-[1,2-di-(9Z,12Z-octadecadienoyl)-sn-glycero-3-phospho]-3'-[1-(9Z,12Z-octadecadienoyl)-sn-glycero-3-phospho]-glycerol + (9Z,12Z)-octadecadienoate + H(+). It carries out the reaction 1-octadecanoyl-2-(15-hydroxy-(5Z,8Z,11Z,13E)-eicosatetraenoyl)-sn-glycero-3-phosphoethanolamine + H2O = 1-octadecanoyl-sn-glycero-3-phosphoethanolamine + 15-hydroxy-(5Z,8Z,11Z,13E)-eicosatetraenoate + H(+). Its activity is regulated as follows. Activated by ATP. Inhibited by calcium-activated calmodulin. Inhibited by bromoenol lactone (BEL). Calcium-independent phospholipase involved in phospholipid remodeling with implications in cellular membrane homeostasis, mitochondrial integrity and signal transduction. Hydrolyzes the ester bond of the fatty acyl group attached at sn-1 or sn-2 position of phospholipids (phospholipase A1 and A2 activity respectively), producing lysophospholipids that are used in deacylation-reacylation cycles. Hydrolyzes both saturated and unsaturated long fatty acyl chains in various glycerophospholipid classes such as phosphatidylcholines, phosphatidylethanolamines and phosphatidates, with a preference for hydrolysis at sn-2 position. Can further hydrolyze lysophospholipids carrying saturated fatty acyl chains (lysophospholipase activity). Upon oxidative stress, contributes to remodeling of mitochondrial phospholipids in pancreatic beta cells, in a repair mechanism to reduce oxidized lipid content. Preferentially hydrolyzes oxidized polyunsaturated fatty acyl chains from cardiolipins, yielding monolysocardiolipins that can be reacylated with unoxidized fatty acyls to regenerate native cardiolipin species. Hydrolyzes oxidized glycerophosphoethanolamines present in pancreatic islets, releasing oxidized polyunsaturated fatty acids such as hydroxyeicosatetraenoates (HETEs). Has thioesterase activity toward fatty-acyl CoA releasing CoA-SH known to facilitate fatty acid transport and beta-oxidation in mitochondria particularly in skeletal muscle. Plays a role in regulation of membrane dynamics and homeostasis. Selectively hydrolyzes sn-2 arachidonoyl group in plasmalogen phospholipids, structural components of lipid rafts and myelin. Regulates F-actin polymerization at the pseudopods, which is required for both speed and directionality of MCP1/CCL2-induced monocyte chemotaxis. Targets membrane phospholipids to produce potent lipid signaling messengers. Generates lysophosphatidate (LPA, 1-acyl-glycerol-3-phosphate), which acts via G-protein receptors in various cell types. Has phospholipase A2 activity toward platelet-activating factor (PAF, 1-O-alkyl-2-acetyl-sn-glycero-3-phosphocholine), likely playing a role in inactivation of this potent pro-inflammatory signaling lipid. In response to glucose, amplifies calcium influx in pancreatic beta cells to promote INS secretion. In terms of biological role, lacks the catalytic domain and may act as a negative regulator of the catalytically active isoforms. This chain is 85/88 kDa calcium-independent phospholipase A2 (PLA2G6), found in Homo sapiens (Human).